The chain runs to 347 residues: NADH-quinone oxidoreductase subunit H (347 aa).

Helical transmembrane passes span 21 to 41, 87 to 107, 118 to 138, 157 to 177, 195 to 215, 258 to 278, 283 to 303, and 323 to 343; these read VAGI…IIYA, GLFL…WAVI, INVG…GVIL, AQMI…VLFA, GIVN…MFLI, NVLL…LPPI, LYAV…FFVF, and WKIF…YLML.

Belongs to the complex I subunit 1 family. In terms of assembly, NDH-1 is composed of 14 different subunits. Subunits NuoA, H, J, K, L, M, N constitute the membrane sector of the complex.

The protein localises to the cell inner membrane. The enzyme catalyses a quinone + NADH + 5 H(+)(in) = a quinol + NAD(+) + 4 H(+)(out). NDH-1 shuttles electrons from NADH, via FMN and iron-sulfur (Fe-S) centers, to quinones in the respiratory chain. The immediate electron acceptor for the enzyme in this species is believed to be ubiquinone. Couples the redox reaction to proton translocation (for every two electrons transferred, four hydrogen ions are translocated across the cytoplasmic membrane), and thus conserves the redox energy in a proton gradient. This subunit may bind ubiquinone. The sequence is that of NADH-quinone oxidoreductase subunit H from Sphingopyxis alaskensis (strain DSM 13593 / LMG 18877 / RB2256) (Sphingomonas alaskensis).